Reading from the N-terminus, the 211-residue chain is Glutathione S-transferase class-mu 28 kDa isozyme (211 aa).

Residues Asp4–Gly86 form the GST N-terminal domain. Glutathione-binding residues include Tyr10, Arg16, Trp41, Lys45, Leu53, Glu70, Ser71, and Asp104. The GST C-terminal domain maps to Thr88–Phe211.

This sequence belongs to the GST superfamily. Mu family. As to quaternary structure, homodimer.

The catalysed reaction is RX + glutathione = an S-substituted glutathione + a halide anion + H(+). Conjugation of reduced glutathione to a wide number of exogenous and endogenous hydrophobic electrophiles. Its function is as follows. GST isoenzymes appear to play a central role in the parasite detoxification system. Other functions are also suspected including a role in increasing the solubility of haematin in the parasite gut. In Schistosoma haematobium (Blood fluke), this protein is Glutathione S-transferase class-mu 28 kDa isozyme.